The primary structure comprises 427 residues: CD209 antigen (427 aa).

Residues 1–37 (MSDSKEPRLQQLGLLEEEQLRGLGFRQTRGYKSLAGC) lie on the Cytoplasmic side of the membrane. 3 short sequence motifs (endocytosis signal) span residues 14-15 (LL), 16-18 (EEE), and 31-34 (YKSL). A helical; Signal-anchor for type II membrane protein transmembrane segment spans residues 38–58 (LGHGPLVLQLLSFTLLAALLV). The Extracellular portion of the chain corresponds to 59–427 (QVSKVPSSIS…ASATPNPPPE (369 aa)). N-linked (GlcNAc...) asparagine glycosylation is present at asparagine 80. A run of 8 repeats spans residues 96–118 (KLQE…PEKS), 119–141 (KQQE…PEKS), 142–164 (KQQE…PEKS), 165–187 (KQQE…PEKS), 188–210 (KQQE…PEKS), 211–233 (KQQE…PEKS), 234–256 (KQQE…PEKS), and 257–280 (KQQE…RRCP). An 8 X approximate tandem repeats region spans residues 96-280 (KLQEIYQELT…AVERLCRRCP (185 aa)). 3 cysteine pairs are disulfide-bonded: cysteine 279–cysteine 290, cysteine 307–cysteine 400, and cysteine 379–cysteine 392. In terms of domain architecture, C-type lectin spans 286 to 401 (FQGNCYFMSN…CNLAKFWICK (116 aa)). Residues glutamate 370, asparagine 372, valine 374, glutamate 377, asparagine 388, and aspartate 389 each contribute to the Ca(2+) site.

In terms of assembly, homotetramer. Interacts with C1QBP; the interaction is indicative for a C1q:C1QBP:CD209 signaling complex. Interacts with ICAM2 and ICAM3 by binding to mannose-like carbohydrates. Interacts (via C-type lectin domain) with CEACAM1 (via Lewis X moieties); this interaction is regulated by the glycosylation pattern of CEACAM1 on cell types and regulates contact between dendritic cells and neutrophils.

The protein localises to the membrane. Pathogen-recognition receptor expressed on the surface of immature dendritic cells (DCs) and involved in initiation of primary immune response. Thought to mediate the endocytosis of pathogens which are subsequently degraded in lysosomal compartments. The receptor returns to the cell membrane surface and the pathogen-derived antigens are presented to resting T-cells via MHC class II proteins to initiate the adaptive immune response. Probably recognizes in a calcium-dependent manner high mannose N-linked oligosaccharides in a variety of pathogen antigens. Functionally, on DCs it is a high affinity receptor for ICAM2 and ICAM3 by binding to mannose-like carbohydrates. May act as a DC rolling receptor that mediates transendothelial migration of DC presursors from blood to tissues by binding endothelial ICAM2. Seems to regulate DC-induced T-cell proliferation by binding to ICAM3 on T-cells in the immunological synapse formed between DC and T-cells. In Gorilla gorilla gorilla (Western lowland gorilla), this protein is CD209 antigen (CD209).